Consider the following 180-residue polypeptide: MIVTEILGNIHEDSGRELVAGRHVEKVVLPSAELVKRIQRLRTDHDRQIGLRLPAGAPDLRDGDVVAVEDAAPSGAGHGDGEQDGTGAPGRGNAVVIQVLPTDVLVIGARSVVEMAFVAHSLGNRHLQAQFFDADSEYGAEVMVVQYDHTVQDFLDHHGVPYSRQERVMPVPFRHAEHTH.

A disordered region spans residues 71–90 (AAPSGAGHGDGEQDGTGAPG).

It belongs to the UreE family.

Its subcellular location is the cytoplasm. Involved in urease metallocenter assembly. Binds nickel. Probably functions as a nickel donor during metallocenter assembly. This chain is Urease accessory protein UreE, found in Kocuria rhizophila (strain ATCC 9341 / DSM 348 / NBRC 103217 / DC2201).